Reading from the N-terminus, the 1157-residue chain is Probable ATP-dependent RNA helicase DHX37 (1157 aa).

The segment covering 1 to 10 (MGKLRRRYNI) has biased composition (basic residues). Disordered regions lie at residues 1-77 (MGKL…KKEK) and 116-225 (TSKL…AAPP). The segment covering 21 to 30 (SKGPPEPPPV) has biased composition (pro residues). Acidic residues predominate over residues 159 to 184 (AEEEEEEEEESESELEEESELDEDPA). 2 stretches are compositionally biased toward pro residues: residues 198–208 (PLPPAPAPSSQ) and 216–225 (VPPPPAAAPP). The Helicase ATP-binding domain maps to 262-429 (MEAVAEHPIV…PRLFAKPPPV (168 aa)). 275-282 (GETGSGKT) lines the ATP pocket. The DEAH box motif lies at 372–375 (DEAH). The region spanning 459–716 (KVCKIHRMLP…DLILQMKALN (258 aa)) is the Helicase C-terminal domain. Disordered regions lie at residues 494–523 (PPSR…SRAR) and 542–584 (VLPA…QPDA). A compositionally biased stretch (basic and acidic residues) spans 499 to 515 (RPQEKDDDQKDSVEEMR). Positions 547–571 (EGDEDREAEVDEEEGALDSDLDLDL) are enriched in acidic residues.

It belongs to the DEAD box helicase family. DEAH subfamily. Part of the small subunit (SSU) processome, composed of more than 70 proteins and the RNA chaperone small nucleolar RNA (snoRNA) U3. Interacts with UTP14A. In terms of tissue distribution, expressed in the fallopian tube, ovary, uterus and testis. Also expressed in the brain.

The protein localises to the nucleus. It localises to the nucleolus. Its subcellular location is the cytoplasm. The protein resides in the nucleus membrane. The enzyme catalyses ATP + H2O = ADP + phosphate + H(+). ATP-binding RNA helicase that plays a role in maturation of the small ribosomal subunit in ribosome biogenesis. Required for the release of the U3 snoRNP from pre-ribosomal particles. Part of the small subunit (SSU) processome, first precursor of the small eukaryotic ribosomal subunit. During the assembly of the SSU processome in the nucleolus, many ribosome biogenesis factors, an RNA chaperone and ribosomal proteins associate with the nascent pre-rRNA and work in concert to generate RNA folding, modifications, rearrangements and cleavage as well as targeted degradation of pre-ribosomal RNA by the RNA exosome. Plays a role in early testis development. Probably also plays a role in brain development. In Homo sapiens (Human), this protein is Probable ATP-dependent RNA helicase DHX37.